A 727-amino-acid chain; its full sequence is NADH-ubiquinone oxidoreductase 75 kDa subunit, mitochondrial (727 aa).

Residues 1-23 constitute a mitochondrion transit peptide; that stretch reads MLRIPVKRALIGLSKSPKGYVRS. The 2Fe-2S ferredoxin-type domain occupies 30 to 108; it reads NLIEVFVDGQ…GWNILTNSEK (79 aa). The [2Fe-2S] cluster site is built by Cys-64, Cys-75, and Cys-78. Lys-84 is modified (N6-acetyllysine). [2Fe-2S] cluster is bound at residue Cys-92. Residues 108–147 enclose the 4Fe-4S His(Cys)3-ligated-type domain; the sequence is KSKKAREGVMEFLLANHPLDCPICDQGGECDLQDQSMMFG. The [4Fe-4S] cluster site is built by His-124, Cys-128, Cys-131, Cys-137, Cys-176, Cys-179, Cys-182, and Cys-226. One can recognise a 4Fe-4S Mo/W bis-MGD-type domain in the interval 245-301; that stretch reads TRKTESIDVMDAVGSNIVVSTRTGEVMRILPRMHEDINEEWISDKTRFAYDGLKRQR. N6-acetyllysine occurs at positions 499 and 709.

Belongs to the complex I 75 kDa subunit family. Core subunit of respiratory chain NADH dehydrogenase (Complex I) which is composed of 45 different subunits. This is the largest subunit of complex I and it is a component of the iron-sulfur (IP) fragment of the enzyme. Complex I associates with ubiquinol-cytochrome reductase complex (Complex III) to form supercomplexes. Interacts with MDM2 and AKAP1. The cofactor is [2Fe-2S] cluster. Requires [4Fe-4S] cluster as cofactor.

Its subcellular location is the mitochondrion inner membrane. It carries out the reaction a ubiquinone + NADH + 5 H(+)(in) = a ubiquinol + NAD(+) + 4 H(+)(out). Core subunit of the mitochondrial membrane respiratory chain NADH dehydrogenase (Complex I) which catalyzes electron transfer from NADH through the respiratory chain, using ubiquinone as an electron acceptor. Essential for catalysing the entry and efficient transfer of electrons within complex I. Plays a key role in the assembly and stability of complex I and participates in the association of complex I with ubiquinol-cytochrome reductase complex (Complex III) to form supercomplexes. The sequence is that of NADH-ubiquinone oxidoreductase 75 kDa subunit, mitochondrial (Ndufs1) from Rattus norvegicus (Rat).